Here is a 72-residue protein sequence, read N- to C-terminus: uncharacterized protein (72 aa).

This is an uncharacterized protein from Escherichia coli (strain K12).